The sequence spans 136 residues: Large ribosomal subunit protein eL27 (136 aa).

One can recognise a KOW domain in the interval 5–40; the sequence is MKPGKVVLVLAGRYSGRKAVIVKNIDDGTSDRPYSH. Lys-27 and Lys-93 each carry N6-acetyllysine.

It belongs to the eukaryotic ribosomal protein eL27 family. In terms of assembly, component of the large ribosomal subunit. Interacts with RRP1B. Component of the large ribosomal subunit. Interacts with RRP1B. Interacts with DHX33.

Its subcellular location is the cytoplasm. The protein resides in the cytosol. It is found in the rough endoplasmic reticulum. Component of the large ribosomal subunit. Required for proper rRNA processing and maturation of 28S and 5.8S rRNAs. The protein is Large ribosomal subunit protein eL27 (RPL27) of Canis lupus familiaris (Dog).